The following is a 285-amino-acid chain: ATP phosphoribosyltransferase (285 aa).

The protein belongs to the ATP phosphoribosyltransferase family. Long subfamily. Mg(2+) is required as a cofactor.

The protein resides in the cytoplasm. The enzyme catalyses 1-(5-phospho-beta-D-ribosyl)-ATP + diphosphate = 5-phospho-alpha-D-ribose 1-diphosphate + ATP. Its pathway is amino-acid biosynthesis; L-histidine biosynthesis; L-histidine from 5-phospho-alpha-D-ribose 1-diphosphate: step 1/9. Its activity is regulated as follows. Feedback inhibited by histidine. Catalyzes the condensation of ATP and 5-phosphoribose 1-diphosphate to form N'-(5'-phosphoribosyl)-ATP (PR-ATP). Has a crucial role in the pathway because the rate of histidine biosynthesis seems to be controlled primarily by regulation of HisG enzymatic activity. This chain is ATP phosphoribosyltransferase, found in Metallosphaera sedula (strain ATCC 51363 / DSM 5348 / JCM 9185 / NBRC 15509 / TH2).